A 207-amino-acid polypeptide reads, in one-letter code: Claudin-11 (207 aa).

Met1 is a topological domain (cytoplasmic). Residues 2-22 form a helical membrane-spanning segment; it reads VATCLQVVGFVTSFVGWIGVI. Topologically, residues 23 to 82 are extracellular; it reads VTTSTNDWVVTCGYTIPTCRKLDELGSKGLWADCVMATGLYHCKPLVDILILPGYVQACR. Residues 83-103 traverse the membrane as a helical segment; that stretch reads ALMIAASVLGLPAILLLLTVL. The Cytoplasmic segment spans residues 104-122; it reads PCIRMGHEPGVAKYRRAQL. The helical transmembrane segment at 123 to 143 threads the bilayer; the sequence is AGVLLILLALCAIVATIWFPV. At 144-157 the chain is on the extracellular side; it reads CAHRETTIVSFGYS. Residues 158–178 form a helical membrane-spanning segment; it reads LYAGWIGAVLCLVGGCVILCC. Over 179-207 the chain is Cytoplasmic; the sequence is AGDAQAFGENRFYYSSGSSSPTHAKSAHV. Residues Ser193, Ser194, Ser197, and Ser198 each carry the phosphoserine modification.

It belongs to the claudin family. In terms of assembly, interacts with tetraspanin-3/TSPAN3. Interacts with OCLN.

The protein resides in the cell junction. Its subcellular location is the tight junction. It is found in the cell membrane. In terms of biological role, plays a major role in tight junction-specific obliteration of the intercellular space, through calcium-independent cell-adhesion activity. This Macaca fascicularis (Crab-eating macaque) protein is Claudin-11 (CLDN11).